Reading from the N-terminus, the 582-residue chain is Vacuolar basic amino acid transporter 5 (582 aa).

Over 1–44 the chain is Cytoplasmic; the sequence is MEETKYSSQQEIEGACGSDASLNARGSNDSPMGLSLYLCLASLT. A helical membrane pass occupies residues 45–65; sequence LVLFITALDILIVGTIIDVVA. Residues 66–80 are Vacuolar-facing; sequence EQFGNYSKTGWLVTG. Asparagine 70 carries an N-linked (GlcNAc...) asparagine glycan. A helical membrane pass occupies residues 81–101; sequence YSLPNAILSLIWGRFASIIGF. Topologically, residues 102–104 are cytoplasmic; it reads QHS. The chain crosses the membrane as a helical span at residues 105–125; that stretch reads LILAILIFEAGSLIAALASSM. The Vacuolar portion of the chain corresponds to 126–132; that stretch reads NMLIFGR. A helical membrane pass occupies residues 133-153; that stretch reads VVAGVGGSGLQTLCFVIGCTM. Residues 154–160 are Cytoplasmic-facing; the sequence is VGERSRP. A helical transmembrane segment spans residues 161–181; it reads LVISILSCAFAVAAIVGPIIG. Residues 182-191 lie on the Vacuolar side of the membrane; the sequence is GAFTTHVTWR. The helical transmembrane segment at 192-212 threads the bilayer; that stretch reads WCFYINLPIGGLAIIMFLLTY. Topologically, residues 213–256 are cytoplasmic; that stretch reads KAENKGILQQIKDAIGTISSFTFSKFRHQVNFKRLMNGIIFKFD. A helical transmembrane segment spans residues 257–277; the sequence is FFGFALCSAGLVLFLLGLTFG. The Vacuolar segment spans residues 278 to 287; that stretch reads GNKYSWNSGQ. A helical transmembrane segment spans residues 288 to 308; sequence VITYLVLGVLLFIFSLVYDFF. Residues 309–329 lie on the Cytoplasmic side of the membrane; it reads LFDKFNPEPDNISYRPLLLRR. The helical transmembrane segment at 330–350 threads the bilayer; the sequence is LVAKPAIIIVNMVTFLLCTGY. Residues 351-372 are Vacuolar-facing; sequence NGQMIYSVQFFQLIFASSAWKA. Residues 373–393 traverse the membrane as a helical segment; the sequence is GLHLIPIVITNVIAAIASGVI. Residues 394 to 401 lie on the Cytoplasmic side of the membrane; the sequence is TKKLGLVK. Residues 402–422 form a helical membrane-spanning segment; sequence PLLIFGGVLGVIGAGLMTLMT. The N-linked (GlcNAc...) asparagine glycan is linked to asparagine 423. Over 423 to 430 the chain is Vacuolar; the sequence is NTSTKSTQ. Residues 431–451 traverse the membrane as a helical segment; sequence IGVLLLPGFSLGFALQASLMS. At 452–469 the chain is on the cytoplasmic side; that stretch reads AQLQITKDRPEAAMDFIE. Residues 470–492 traverse the membrane as a helical segment; sequence VTAFNTFMKSLGTTLGGVLSTTV. The Vacuolar segment spans residues 493-539; the sequence is FSASFHNKVSRAHLEPYEGKTVDDMILYRLQNYDGSHSTIGNILSDS. A helical transmembrane segment spans residues 540 to 560; the sequence is IKNVFWMDLGFYALGFLFCSF. Over 561–582 the chain is Cytoplasmic; sequence SSNKKLIIPKKDDTPEDNLEDK.

The protein belongs to the major facilitator superfamily.

Its subcellular location is the vacuole membrane. Its function is as follows. Transporter required for vacuolar uptake of basic amino acids. The protein is Vacuolar basic amino acid transporter 5 (VBA5) of Saccharomyces cerevisiae (strain ATCC 204508 / S288c) (Baker's yeast).